We begin with the raw amino-acid sequence, 124 residues long: Large ribosomal subunit protein bL12 (124 aa).

The protein belongs to the bacterial ribosomal protein bL12 family. Homodimer. Part of the ribosomal stalk of the 50S ribosomal subunit. Forms a multimeric L10(L12)X complex, where L10 forms an elongated spine to which 2 to 4 L12 dimers bind in a sequential fashion. Binds GTP-bound translation factors.

Functionally, forms part of the ribosomal stalk which helps the ribosome interact with GTP-bound translation factors. Is thus essential for accurate translation. The polypeptide is Large ribosomal subunit protein bL12 (Nitrosomonas europaea (strain ATCC 19718 / CIP 103999 / KCTC 2705 / NBRC 14298)).